The following is a 231-amino-acid chain: MATNTPTEPGGDLALLGLMQLVSPALPIGAFAWSQGLESAFELGWVNNEAELAQWIEGVLEDGLSRCELPLLARLQTAWANDDGATIAHWNQWLHATRETAELSDEDTRLGGALKTLLGNLNLLPDQTLIPAEPGYITLFAWAAQVRRVPVRQTLLGFAWAWLENQLAVACKALPLGHTAAQRIIEQLRPALVNATDQALARQDHELGPILPGLALGSALHETQYSRLFRS.

The protein belongs to the UreF family. In terms of assembly, ureD, UreF and UreG form a complex that acts as a GTP-hydrolysis-dependent molecular chaperone, activating the urease apoprotein by helping to assemble the nickel containing metallocenter of UreC. The UreE protein probably delivers the nickel.

It localises to the cytoplasm. Functionally, required for maturation of urease via the functional incorporation of the urease nickel metallocenter. The polypeptide is Urease accessory protein UreF (Marinobacter nauticus (strain ATCC 700491 / DSM 11845 / VT8) (Marinobacter aquaeolei)).